A 217-amino-acid chain; its full sequence is Small ribosomal subunit protein uS3 (217 aa).

The 69-residue stretch at 38-106 (IRKFLKKRLS…KVTLDIQEVR (69 aa)) folds into the KH type-2 domain.

Belongs to the universal ribosomal protein uS3 family. Part of the 30S ribosomal subunit. Forms a tight complex with proteins S10 and S14.

Functionally, binds the lower part of the 30S subunit head. Binds mRNA in the 70S ribosome, positioning it for translation. The protein is Small ribosomal subunit protein uS3 of Desulfotalea psychrophila (strain LSv54 / DSM 12343).